Here is a 390-residue protein sequence, read N- to C-terminus: Lipid-A-disaccharide synthase (390 aa).

It belongs to the LpxB family.

It carries out the reaction a lipid X + a UDP-2-N,3-O-bis[(3R)-3-hydroxyacyl]-alpha-D-glucosamine = a lipid A disaccharide + UDP + H(+). It functions in the pathway bacterial outer membrane biogenesis; LPS lipid A biosynthesis. Its function is as follows. Condensation of UDP-2,3-diacylglucosamine and 2,3-diacylglucosamine-1-phosphate to form lipid A disaccharide, a precursor of lipid A, a phosphorylated glycolipid that anchors the lipopolysaccharide to the outer membrane of the cell. This is Lipid-A-disaccharide synthase from Haemophilus ducreyi (strain 35000HP / ATCC 700724).